A 358-amino-acid polypeptide reads, in one-letter code: Oxidase FUB9 (358 aa).

In terms of domain architecture, FMN hydroxy acid dehydrogenase spans 6–350; it reads SSKPQIFSIQ…SPAHLSILNA (345 aa). Residue Y32 participates in a 2-oxocarboxylate binding. Residues S114, Q138, and T166 each contribute to the FMN site. An a 2-oxocarboxylate-binding site is contributed by R175. K221 serves as a coordination point for FMN. The active-site Proton acceptor is the H245. Position 248 (R248) interacts with a 2-oxocarboxylate. Residues 276–280 and 299–300 contribute to the FMN site; these read DGGFR and GR.

Belongs to the FMN-dependent alpha-hydroxy acid dehydrogenase family. FMN serves as cofactor.

It participates in mycotoxin biosynthesis. In terms of biological role, oxidase; part of the gene cluster that mediates the biosynthesis of fusaric acid, a mycotoxin with low to moderate toxicity to animals and humans, but with high phytotoxic properties. L-aspartate is suggested as fusaric acid amino acid precursor that is activated and further processed to O-acetyl-L-homoserine by cluster enzymes aspartate kinase FUB3 and homoserine O-acetyltransferase FUB5, as well as enzymes of the primary metabolism. The polyketide synthase (PKS) FUB1 generates the triketide trans-2-hexenal which is presumptively released by the hydrolase FUB4 and linked to the NRPS-bound amino acid precursor by NAD(P)-dependent dehydrogenase FUB6. FUB1, FUB4, and the non-canonical NRPS Fub8 may form an enzyme complex. Further processing of the NRPS-bound intermediate might be carried out by FUB6 and the sulfhydrylase FUB7, enabling a spontaneous electrocyclization to close the carbon backbone of fusaric acid. Dihydrofusaric acid is likely to be released via reduction by the thioester reductase (TR) domain of FUB8 whereupon the final oxidation to fusaric acid may (also) be performed by the FMN-dependent dehydrogenase FUB9. This Gibberella fujikuroi (strain CBS 195.34 / IMI 58289 / NRRL A-6831) (Bakanae and foot rot disease fungus) protein is Oxidase FUB9.